The primary structure comprises 474 residues: ATP synthase subunit beta (474 aa).

151-158 (GGAGVGKT) contributes to the ATP binding site.

The protein belongs to the ATPase alpha/beta chains family. In terms of assembly, F-type ATPases have 2 components, CF(1) - the catalytic core - and CF(0) - the membrane proton channel. CF(1) has five subunits: alpha(3), beta(3), gamma(1), delta(1), epsilon(1). CF(0) has three main subunits: a(1), b(2) and c(9-12). The alpha and beta chains form an alternating ring which encloses part of the gamma chain. CF(1) is attached to CF(0) by a central stalk formed by the gamma and epsilon chains, while a peripheral stalk is formed by the delta and b chains.

The protein resides in the cell inner membrane. It catalyses the reaction ATP + H2O + 4 H(+)(in) = ADP + phosphate + 5 H(+)(out). In terms of biological role, produces ATP from ADP in the presence of a proton gradient across the membrane. The catalytic sites are hosted primarily by the beta subunits. This Ruegeria sp. (strain TM1040) (Silicibacter sp.) protein is ATP synthase subunit beta.